We begin with the raw amino-acid sequence, 52 residues long: Large ribosomal subunit protein eL40 (52 aa).

It belongs to the eukaryotic ribosomal protein eL40 family.

The polypeptide is Large ribosomal subunit protein eL40 (Thermococcus onnurineus (strain NA1)).